The primary structure comprises 123 residues: Transmembrane protein 254 (123 aa).

3 helical membrane passes run 15-35, 63-83, and 95-115; these read LFWF…VFWP, NGYW…LVLC, and LLWF…LFAY.

It localises to the membrane. This is Transmembrane protein 254 (Tmem254) from Rattus norvegicus (Rat).